The following is a 152-amino-acid chain: Ribonuclease pancreatic (152 aa).

Positions 1 to 24 (MALDKSVILLPLLVLVLLVLGCLG) are cleaved as a signal peptide. Lys-31 and Arg-34 together coordinate substrate. Residue His-36 is the Proton acceptor of the active site. An N-linked (GlcNAc...) asparagine glycan is attached at Asn-46. 4 disulfides stabilise this stretch: Cys-50/Cys-108, Cys-64/Cys-119, Cys-82/Cys-134, and Cys-89/Cys-96. Substrate is bound by residues 65-69 (KPVNT), Lys-90, and Arg-109. Asn-112 carries an N-linked (GlcNAc...) asparagine glycan. His-143 (proton donor) is an active-site residue.

The protein belongs to the pancreatic ribonuclease family. As to quaternary structure, monomer. Interacts with and forms tight 1:1 complexes with RNH1. Dimerization of two such complexes may occur. Interaction with RNH1 inhibits this protein.

It localises to the secreted. The enzyme catalyses an [RNA] containing cytidine + H2O = an [RNA]-3'-cytidine-3'-phosphate + a 5'-hydroxy-ribonucleotide-3'-[RNA].. It carries out the reaction an [RNA] containing uridine + H2O = an [RNA]-3'-uridine-3'-phosphate + a 5'-hydroxy-ribonucleotide-3'-[RNA].. Its function is as follows. Endonuclease that catalyzes the cleavage of RNA on the 3' side of pyrimidine nucleotides. Acts on single-stranded and double-stranded RNA. The sequence is that of Ribonuclease pancreatic (RNASE1) from Miopithecus talapoin (Angolan talapoin).